The sequence spans 153 residues: MTERKGMEEINREEFQEVVVNIGRVTKVVKGGRRFRFNALVVVGNKNGLVGFGLGKAKEVPDAIKKAVDDAFKNLIHVTIKGTTIAHDIEHKYNASRILLKPASEGTGVIAGGSTRPIVELAGIKDILTKSLGSNNPYNVVRATFDALAKIKA.

The region spanning 15-78 (FQEVVVNIGR…DDAFKNLIHV (64 aa)) is the S5 DRBM domain.

This sequence belongs to the universal ribosomal protein uS5 family. As to quaternary structure, part of the 30S ribosomal subunit. Contacts proteins S4 and S8.

Functionally, with S4 and S12 plays an important role in translational accuracy. Located at the back of the 30S subunit body where it stabilizes the conformation of the head with respect to the body. This chain is Small ribosomal subunit protein uS5, found in Helicobacter pylori (strain P12).